A 613-amino-acid polypeptide reads, in one-letter code: Na(+)/H(+) antiporter NhaA 1 (613 aa).

The interval 1–24 (MTEASARTIGPLPSRFSRDPKTPR) is disordered. The na(+)/H(+) antiporter NhaA stretch occupies residues 1-408 (MTEASARTIG…DPARQDEARV (408 aa)). 11 helical membrane-spanning segments follow: residues 29-49 (AAAA…NSPW), 81-101 (GLMA…FVIG), 110-130 (AVPV…FLTF), 138-158 (QAWG…LAVI), 168-188 (IFLL…IALF), 191-211 (DDLK…LAMV), 231-251 (IALY…AVLI), 300-320 (AVGP…NAGV), 337-357 (WGIV…ATAL), 377-397 (GGAA…DVAI), and 408-428 (VGVL…FRIT). The Thioredoxin domain maps to 409–613 (GVLIASVLAF…SLIRALEAGR (205 aa)).

It in the N-terminal section; belongs to the NhaA Na(+)/H(+) (TC 2.A.33) antiporter family.

It is found in the cell membrane. It catalyses the reaction Na(+)(in) + 2 H(+)(out) = Na(+)(out) + 2 H(+)(in). In terms of biological role, na(+)/H(+) antiporter that extrudes sodium in exchange for external protons. In Mycobacterium sp. (strain JLS), this protein is Na(+)/H(+) antiporter NhaA 1.